The sequence spans 101 residues: RNA-binding protein Hfq (101 aa).

The Sm domain occupies 9-68; that stretch reads DPFLNALRRERVPVSIYLVNGIKLQGQVESFDQFVILLKNTVSQMVYKHAISTVVPSPPV. The segment at 62 to 101 is disordered; it reads VVPSPPVSHHSNTPSGSTNNYHGSNPSAPQQPQQDSDDAE. The span at 70–86 shows a compositional bias: polar residues; sequence HHSNTPSGSTNNYHGSN.

This sequence belongs to the Hfq family. As to quaternary structure, homohexamer.

Its function is as follows. RNA chaperone that binds small regulatory RNA (sRNAs) and mRNAs to facilitate mRNA translational regulation in response to envelope stress, environmental stress and changes in metabolite concentrations. Also binds with high specificity to tRNAs. The chain is RNA-binding protein Hfq from Yersinia pestis (strain Pestoides F).